The primary structure comprises 282 residues: L-allo-isoleucyltransferase (282 aa).

The active-site Acyl-thioester intermediate is the Cys105. The AB hydrolase-1 domain occupies 169 to 261; sequence HTQSTYTPSD…DGQHHDFVDG (93 aa).

It belongs to the AB hydrolase superfamily.

It catalyses the reaction holo-[CmaD peptidyl-carrier protein] + L-alloisoleucyl-[CmaA peptidyl-carrier protein] = L-alloisoleucyl-[CmaD peptidyl-carrier protein] + holo-[CmaA peptidyl-carrier protein]. In terms of biological role, involved in the biosynthesis of the phytotoxin coronatine (COR). Catalyzes the transfer of the aminoacyl group covalently attached to the pantetheinyl arm of CmaA to the holo-pantetheinyl arm of CmaD. During the shuttling process, CmaE generates a covalent-aminoacyl-S-Cys enzyme intermediate by the action of its donor substrate L-aminoacyl-S-CmaA and delivers it to the sulfhydryl group attached to the phosphopantetheinyl arm on CmaD. This chain is L-allo-isoleucyltransferase, found in Pseudomonas savastanoi pv. glycinea (Pseudomonas syringae pv. glycinea).